We begin with the raw amino-acid sequence, 542 residues long: Putative cysteine ligase BshC (542 aa).

Positions 458–487 (VAKNAAIIQAQIEFLQQTLERALLSKHEVE) form a coiled coil.

It belongs to the BshC family.

Its function is as follows. Involved in bacillithiol (BSH) biosynthesis. May catalyze the last step of the pathway, the addition of cysteine to glucosamine malate (GlcN-Mal) to generate BSH. The chain is Putative cysteine ligase BshC from Geobacillus thermodenitrificans (strain NG80-2).